Reading from the N-terminus, the 351-residue chain is Protein Wnt-2b-A (351 aa).

The signal sequence occupies residues 1–16 (MHFAYILILLILTPRV). 11 disulfide bridges follow: Cys-67–Cys-78, Cys-118–Cys-126, Cys-128–Cys-148, Cys-197–Cys-211, Cys-199–Cys-206, Cys-269–Cys-300, Cys-285–Cys-295, Cys-299–Cys-339, Cys-315–Cys-330, Cys-317–Cys-327, and Cys-322–Cys-323. N-linked (GlcNAc...) asparagine glycosylation occurs at Asn-77. Ser-203 carries the O-palmitoleoyl serine; by PORCN lipid modification.

It belongs to the Wnt family. In terms of processing, palmitoleoylation is required for efficient binding to frizzled receptors. Depalmitoleoylation leads to Wnt signaling pathway inhibition. Expressed maternally in both vegetal and animal blastomeres with enrichment in the animal hemisphere. Expressed zygotically near the prosencephalic-mesencephalic boundary of the developing brain in neurula and tailbud stages, and also in non-brain areas at tadpole stages.

The protein resides in the secreted. Its subcellular location is the extracellular space. The protein localises to the extracellular matrix. Ligand for members of the frizzled family of seven transmembrane receptors. Functions in the canonical Wnt/beta-catenin signaling pathway. The chain is Protein Wnt-2b-A (wnt2b-a) from Xenopus laevis (African clawed frog).